Here is a 492-residue protein sequence, read N- to C-terminus: Probable malate:quinone oxidoreductase 1 (492 aa).

It belongs to the MQO family. It depends on FAD as a cofactor.

It catalyses the reaction (S)-malate + a quinone = a quinol + oxaloacetate. The protein operates within carbohydrate metabolism; tricarboxylic acid cycle; oxaloacetate from (S)-malate (quinone route): step 1/1. The chain is Probable malate:quinone oxidoreductase 1 from Staphylococcus epidermidis (strain ATCC 35984 / DSM 28319 / BCRC 17069 / CCUG 31568 / BM 3577 / RP62A).